The primary structure comprises 282 residues: ATP synthase gamma chain (282 aa).

It belongs to the ATPase gamma chain family. F-type ATPases have 2 components, CF(1) - the catalytic core - and CF(0) - the membrane proton channel. CF(1) has five subunits: alpha(3), beta(3), gamma(1), delta(1), epsilon(1). CF(0) has three main subunits: a, b and c.

It is found in the cell membrane. Functionally, produces ATP from ADP in the presence of a proton gradient across the membrane. The gamma chain is believed to be important in regulating ATPase activity and the flow of protons through the CF(0) complex. This is ATP synthase gamma chain from Clostridium acetobutylicum (strain ATCC 824 / DSM 792 / JCM 1419 / IAM 19013 / LMG 5710 / NBRC 13948 / NRRL B-527 / VKM B-1787 / 2291 / W).